The primary structure comprises 155 residues: Molybdopterin synthase catalytic subunit (155 aa).

Residues 109–110 (HR), Lys125, and 132–134 (KKE) each bind substrate.

The protein belongs to the MoaE family. MOCS2B subfamily. In terms of assembly, heterotetramer; composed of 2 small (MOCS2A) and 2 large (MOCS2B) subunits.

Its subcellular location is the cytoplasm. The protein localises to the cytosol. The catalysed reaction is 2 [molybdopterin-synthase sulfur-carrier protein]-C-terminal-Gly-aminoethanethioate + cyclic pyranopterin phosphate + H2O = molybdopterin + 2 [molybdopterin-synthase sulfur-carrier protein]-C-terminal Gly-Gly + 2 H(+). Its pathway is cofactor biosynthesis; molybdopterin biosynthesis. Catalytic subunit of the molybdopterin synthase complex, a complex that catalyzes the conversion of precursor Z into molybdopterin. Acts by mediating the incorporation of 2 sulfur atoms from thiocarboxylated MOCS2A into precursor Z to generate a dithiolene group. In Taeniopygia guttata (Zebra finch), this protein is Molybdopterin synthase catalytic subunit.